Reading from the N-terminus, the 276-residue chain is uncharacterized protein (276 aa).

A signal peptide spans M1–A19. Residue C20 is the site of N-palmitoyl cysteine attachment. A lipid anchor (S-diacylglycerol cysteine) is attached at C20.

Belongs to the NlpA lipoprotein family.

It is found in the cell membrane. This is an uncharacterized protein from Bacillus subtilis (strain 168).